Consider the following 386-residue polypeptide: Ribosomal RNA small subunit methyltransferase H (386 aa).

Residues 97–99, D116, Y143, D167, and Q174 each bind S-adenosyl-L-methionine; that span reads GGH.

The protein belongs to the methyltransferase superfamily. RsmH family.

Its subcellular location is the cytoplasm. The enzyme catalyses cytidine(1402) in 16S rRNA + S-adenosyl-L-methionine = N(4)-methylcytidine(1402) in 16S rRNA + S-adenosyl-L-homocysteine + H(+). In terms of biological role, specifically methylates the N4 position of cytidine in position 1402 (C1402) of 16S rRNA. In Mycobacterium avium (strain 104), this protein is Ribosomal RNA small subunit methyltransferase H.